The primary structure comprises 82 residues: uncharacterized protein (82 aa).

One can recognise a Resolvase/invertase-type recombinase catalytic domain in the interval 11–82; it reads NVGIYVRVST…HIEQGIMTHC (72 aa). The O-(5'-phospho-DNA)-serine intermediate role is filled by serine 19.

This sequence belongs to the site-specific recombinase resolvase family.

This is an uncharacterized protein from Bacillus phage phi105 (Bacteriophage phi-105).